The chain runs to 519 residues: Cytochrome P450 4A11 (519 aa).

A propeptide spanning residues 1–4 is cleaved from the precursor; the sequence is MSVS. Glu321 is a binding site for heme. At Ser440 the chain carries Phosphoserine. Cys457 provides a ligand contact to heme.

The protein belongs to the cytochrome P450 family. Requires heme as cofactor. As to expression, expressed in liver. Expressed in S2 and S3 segments of proximal tubules in cortex and outer medulla of kidney.

The protein localises to the endoplasmic reticulum membrane. The protein resides in the microsome membrane. It catalyses the reaction an organic molecule + reduced [NADPH--hemoprotein reductase] + O2 = an alcohol + oxidized [NADPH--hemoprotein reductase] + H2O + H(+). The catalysed reaction is an omega-methyl-long-chain fatty acid + reduced [NADPH--hemoprotein reductase] + O2 = an omega-hydroxy-long-chain fatty acid + oxidized [NADPH--hemoprotein reductase] + H2O + H(+). It carries out the reaction dodecanoate + reduced [NADPH--hemoprotein reductase] + O2 = 12-hydroxydodecanoate + oxidized [NADPH--hemoprotein reductase] + H2O + H(+). The enzyme catalyses tetradecanoate + reduced [NADPH--hemoprotein reductase] + O2 = 14-hydroxytetradecanoate + oxidized [NADPH--hemoprotein reductase] + H2O + H(+). It catalyses the reaction hexadecanoate + reduced [NADPH--hemoprotein reductase] + O2 = 16-hydroxyhexadecanoate + oxidized [NADPH--hemoprotein reductase] + H2O + H(+). The catalysed reaction is (9Z)-octadecenoate + reduced [NADPH--hemoprotein reductase] + O2 = 18-hydroxy-(9Z)-octadecenoate + oxidized [NADPH--hemoprotein reductase] + H2O + H(+). It carries out the reaction (5Z,8Z,11Z,14Z)-eicosatetraenoate + reduced [NADPH--hemoprotein reductase] + O2 = 20-hydroxy-(5Z,8Z,11Z,14Z)-eicosatetraenoate + oxidized [NADPH--hemoprotein reductase] + H2O + H(+). The enzyme catalyses 22-hydroxydocosanoate + reduced [NADPH--hemoprotein reductase] + O2 = 22-oxodocosanoate + oxidized [NADPH--hemoprotein reductase] + 2 H2O + H(+). It catalyses the reaction 22-oxodocosanoate + reduced [NADPH--hemoprotein reductase] + O2 = docosanedioate + oxidized [NADPH--hemoprotein reductase] + H2O + 2 H(+). The catalysed reaction is (9R,10S)-epoxy-octadecanoate + reduced [NADPH--hemoprotein reductase] + O2 = 18-hydroxy-(9R,10S)-epoxy-octadecanoate + oxidized [NADPH--hemoprotein reductase] + H2O + H(+). It carries out the reaction 3-hydroxyhexadecanoate + reduced [NADPH--hemoprotein reductase] + O2 = 3,16-dihydroxyhexadecanoate + oxidized [NADPH--hemoprotein reductase] + H2O + H(+). It participates in lipid metabolism; arachidonate metabolism. It functions in the pathway lipid metabolism; oxylipin biosynthesis. With respect to regulation, activated by cytochrome b5. Functionally, a cytochrome P450 monooxygenase involved in the metabolism of fatty acids and their oxygenated derivatives (oxylipins). Mechanistically, uses molecular oxygen inserting one oxygen atom into a substrate, and reducing the second into a water molecule, with two electrons provided by NADPH via cytochrome P450 reductase (CPR; NADPH-ferrihemoprotein reductase). Catalyzes predominantly the oxidation of the terminal carbon (omega-oxidation) of saturated and unsaturated fatty acids, the catalytic efficiency decreasing in the following order: dodecanoic &gt; tetradecanoic &gt; (9Z)-octadecenoic &gt; (9Z,12Z)-octadecadienoic &gt; hexadecanoic acid. Acts as a major omega-hydroxylase for dodecanoic (lauric) acid in liver. Participates in omega-hydroxylation of (5Z,8Z,11Z,14Z)-eicosatetraenoic acid (arachidonate) to 20-hydroxyeicosatetraenoic acid (20-HETE), a signaling molecule acting both as vasoconstrictive and natriuretic with overall effect on arterial blood pressure. Can also catalyze the oxidation of the penultimate carbon (omega-1 oxidation) of fatty acids with lower efficiency. May contribute to the degradation of saturated very long-chain fatty acids (VLCFAs) such as docosanoic acid, by catalyzing successive omega-oxidations to the corresponding dicarboxylic acid, thereby initiating chain shortening. Omega-hydroxylates (9R,10S)-epoxy-octadecanoate stereoisomer. Plays a minor role in omega-oxidation of long-chain 3-hydroxy fatty acids. Has little activity toward prostaglandins A1 and E1. The protein is Cytochrome P450 4A11 of Homo sapiens (Human).